The chain runs to 1368 residues: DNA-directed RNA polymerase subunit beta (1368 aa).

This sequence belongs to the RNA polymerase beta chain family. As to quaternary structure, the RNAP catalytic core consists of 2 alpha, 1 beta, 1 beta' and 1 omega subunit. When a sigma factor is associated with the core the holoenzyme is formed, which can initiate transcription.

It carries out the reaction RNA(n) + a ribonucleoside 5'-triphosphate = RNA(n+1) + diphosphate. Its function is as follows. DNA-dependent RNA polymerase catalyzes the transcription of DNA into RNA using the four ribonucleoside triphosphates as substrates. This chain is DNA-directed RNA polymerase subunit beta, found in Burkholderia multivorans (strain ATCC 17616 / 249).